We begin with the raw amino-acid sequence, 269 residues long: Cytochrome c oxidase subunit 3 (269 aa).

7 helical membrane passes run 24–44 (FYNS…MHGF), 46–66 (NMYI…TLWF), 90–110 (GVGL…WTFF), 132–152 (IDPF…GVTV), 167–187 (ALYG…FQGI), 207–227 (FSTG…SVGL), and 247–267 (ILYW…IYFW).

It belongs to the cytochrome c oxidase subunit 3 family. In terms of assembly, component of the cytochrome c oxidase (complex IV, CIV), a multisubunit enzyme composed of a catalytic core of 3 subunits and several supernumerary subunits. The complex exists as a monomer or a dimer and forms supercomplexes (SCs) in the inner mitochondrial membrane with ubiquinol-cytochrome c oxidoreductase (cytochrome b-c1 complex, complex III, CIII).

It localises to the mitochondrion inner membrane. The catalysed reaction is 4 Fe(II)-[cytochrome c] + O2 + 8 H(+)(in) = 4 Fe(III)-[cytochrome c] + 2 H2O + 4 H(+)(out). Its function is as follows. Component of the cytochrome c oxidase, the last enzyme in the mitochondrial electron transport chain which drives oxidative phosphorylation. The respiratory chain contains 3 multisubunit complexes succinate dehydrogenase (complex II, CII), ubiquinol-cytochrome c oxidoreductase (cytochrome b-c1 complex, complex III, CIII) and cytochrome c oxidase (complex IV, CIV), that cooperate to transfer electrons derived from NADH and succinate to molecular oxygen, creating an electrochemical gradient over the inner membrane that drives transmembrane transport and the ATP synthase. Cytochrome c oxidase is the component of the respiratory chain that catalyzes the reduction of oxygen to water. Electrons originating from reduced cytochrome c in the intermembrane space (IMS) are transferred via the dinuclear copper A center (CU(A)) of subunit 2 and heme A of subunit 1 to the active site in subunit 1, a binuclear center (BNC) formed by heme A3 and copper B (CU(B)). The BNC reduces molecular oxygen to 2 water molecules using 4 electrons from cytochrome c in the IMS and 4 protons from the mitochondrial matrix. The sequence is that of Cytochrome c oxidase subunit 3 (COXIII) from Trichophyton rubrum (Athlete's foot fungus).